The primary structure comprises 434 residues: Gamma-glutamyl phosphate reductase (434 aa).

This sequence belongs to the gamma-glutamyl phosphate reductase family.

Its subcellular location is the cytoplasm. It catalyses the reaction L-glutamate 5-semialdehyde + phosphate + NADP(+) = L-glutamyl 5-phosphate + NADPH + H(+). It functions in the pathway amino-acid biosynthesis; L-proline biosynthesis; L-glutamate 5-semialdehyde from L-glutamate: step 2/2. Its function is as follows. Catalyzes the NADPH-dependent reduction of L-glutamate 5-phosphate into L-glutamate 5-semialdehyde and phosphate. The product spontaneously undergoes cyclization to form 1-pyrroline-5-carboxylate. This Trichormus variabilis (strain ATCC 29413 / PCC 7937) (Anabaena variabilis) protein is Gamma-glutamyl phosphate reductase.